The sequence spans 386 residues: Citrate synthase (386 aa).

Catalysis depends on residues His266 and Asp322.

Belongs to the citrate synthase family.

The catalysed reaction is oxaloacetate + acetyl-CoA + H2O = citrate + CoA + H(+). It functions in the pathway carbohydrate metabolism; tricarboxylic acid cycle; isocitrate from oxaloacetate: step 1/2. The chain is Citrate synthase (gltA) from Acidithiobacillus ferridurans.